The primary structure comprises 116 residues: Large ribosomal subunit protein bL20c (116 aa).

It belongs to the bacterial ribosomal protein bL20 family.

The protein localises to the plastid. It is found in the chloroplast. In terms of biological role, binds directly to 23S ribosomal RNA and is necessary for the in vitro assembly process of the 50S ribosomal subunit. It is not involved in the protein synthesizing functions of that subunit. This chain is Large ribosomal subunit protein bL20c, found in Rhodomonas salina (Cryptomonas salina).